A 357-amino-acid polypeptide reads, in one-letter code: (+)-eremophilene synthase (357 aa).

Positions 100 and 105 each coordinate Mg(2+). A DDXXE motif motif is present at residues 100-105 (DDDFDE). Arg-198 provides a ligand contact to substrate. Mg(2+) contacts are provided by Asn-244 and Ser-248. Position 251 (Lys-251) interacts with substrate. Asp-252 is a Mg(2+) binding site. 331–332 (RY) is a substrate binding site.

It belongs to the terpene synthase family. Mg(2+) is required as a cofactor.

The catalysed reaction is (2E,6E)-farnesyl diphosphate = (+)-eremophilene + diphosphate. It participates in secondary metabolite biosynthesis; terpenoid biosynthesis. In terms of biological role, catalyzes the conversion of (2E,6E)-farnesyl diphosphate (FPP) to yield the bicyclic sesquiterpene eremophilene via a 1,10-cyclization, which requires the abstraction of the pyrophosphate from FPP to yield the (E,E)-germacradienyl cation. The only accepted substrate is farnesyl diphosphate (FPP). This Gibberella fujikuroi (strain CBS 195.34 / IMI 58289 / NRRL A-6831) (Bakanae and foot rot disease fungus) protein is (+)-eremophilene synthase.